A 656-amino-acid chain; its full sequence is Vacuolar amino acid transporter 3 (656 aa).

The disordered stretch occupies residues 1–109 (MSNSQSIKIK…VPSTSEDPDV (109 aa)). The segment covering 15 to 28 (NENFASGSYSSRRS) has biased composition (polar residues). Phosphoserine occurs at positions 37 and 53. The span at 50–71 (ISPSESNLPNNVAENTTDTPVN) shows a compositional bias: polar residues. Over residues 75–97 (IRDENHNSRKGKDVTLNSDEAHS) the composition is skewed to basic and acidic residues. Position 172 is a phosphoserine (Ser172). 11 helical membrane passes run 280-300 (AVLLLLKSFVGTGVLFLPKAF), 307-327 (FSSATLLIVGVLSHICFLLLI), 351-371 (FAILASIVVSQIGFSSAYISF), 389-409 (EYHLAVFIFIQFLVFVPLSLV), 419-439 (ALIADVFILLGILYLYFWDVI), 457-477 (FSLFIGVAIFTYEGICLILPI), 494-514 (VMAAISLLFISIGLLSYAAFG), 537-557 (LYAIAILLSTPLQLFPAIAII), 578-598 (YLRVLIVILAILISWAGSSRL), 601-621 (FVSMVGSVCCIPLIYMYPPML), and 636-656 (DIFMFTIGAFAMAFTTYMTFF).

It belongs to the amino acid/polyamine transporter 2 family.

The protein resides in the endoplasmic reticulum membrane. It localises to the vacuole membrane. Involved in amino acid efflux from the vacuole to the cytoplasm. Capable of transporting large neutral amino acids including tyrosine, glutamine, asparagine, isoleucine and leucine. Required for spore formation. This chain is Vacuolar amino acid transporter 3 (avt3), found in Schizosaccharomyces pombe (strain 972 / ATCC 24843) (Fission yeast).